We begin with the raw amino-acid sequence, 389 residues long: Aspartyl protease UND (389 aa).

Residues 1–19 form the signal peptide; the sequence is MKTTMNFVFLFFLPLLINA. The Peptidase A1 domain occupies 58 to 383; that stretch reads FMAEIHFGSP…DLSAKTAYIN (326 aa). Asp76 is a catalytic residue. A disulfide bond links Cys86 and Cys92. Residue Asn238 is glycosylated (N-linked (GlcNAc...) asparagine). Asp268 is a catalytic residue. A disulfide bridge links Cys304 with Cys346.

It belongs to the peptidase A1 family.

Probable aspartic protease activated by the transcription factor MYB80. May participate in the regulation of the timing of tapetal programmed cell death (PCD) which is critical for pollen development. In Arabidopsis thaliana (Mouse-ear cress), this protein is Aspartyl protease UND.